The sequence spans 41 residues: uncharacterized protein (41 aa).

This is an uncharacterized protein from Dictyostelium discoideum (Social amoeba).